Here is a 293-residue protein sequence, read N- to C-terminus: Fructose-bisphosphate aldolase (293 aa).

S50 lines the D-glyceraldehyde 3-phosphate pocket. D85 acts as the Proton donor in catalysis. Zn(2+) contacts are provided by H86, D106, E136, and H178. G179 contacts dihydroxyacetone phosphate. H208 is a binding site for Zn(2+). Dihydroxyacetone phosphate-binding positions include 209-211 (GGS) and 230-233 (NVNT).

This sequence belongs to the class II fructose-bisphosphate aldolase family. Zn(2+) is required as a cofactor.

The catalysed reaction is beta-D-fructose 1,6-bisphosphate = D-glyceraldehyde 3-phosphate + dihydroxyacetone phosphate. It functions in the pathway carbohydrate degradation; glycolysis; D-glyceraldehyde 3-phosphate and glycerone phosphate from D-glucose: step 4/4. In terms of biological role, catalyzes the aldol condensation of dihydroxyacetone phosphate (DHAP or glycerone-phosphate) with glyceraldehyde 3-phosphate (G3P) to form fructose 1,6-bisphosphate (FBP) in gluconeogenesis and the reverse reaction in glycolysis. This Streptococcus pyogenes serotype M6 (strain ATCC BAA-946 / MGAS10394) protein is Fructose-bisphosphate aldolase (fba).